A 418-amino-acid chain; its full sequence is Enolase (418 aa).

Glutamine 162 serves as a coordination point for (2R)-2-phosphoglycerate. Glutamate 204 functions as the Proton donor in the catalytic mechanism. Mg(2+) is bound by residues aspartate 241, glutamate 283, and aspartate 309. Positions 334, 363, 364, and 385 each coordinate (2R)-2-phosphoglycerate. Catalysis depends on lysine 334, which acts as the Proton acceptor.

This sequence belongs to the enolase family. The cofactor is Mg(2+).

The protein resides in the cytoplasm. Its subcellular location is the secreted. It localises to the cell surface. It catalyses the reaction (2R)-2-phosphoglycerate = phosphoenolpyruvate + H2O. It functions in the pathway carbohydrate degradation; glycolysis; pyruvate from D-glyceraldehyde 3-phosphate: step 4/5. In terms of biological role, catalyzes the reversible conversion of 2-phosphoglycerate (2-PG) into phosphoenolpyruvate (PEP). It is essential for the degradation of carbohydrates via glycolysis. The protein is Enolase of Pelagibacter ubique (strain HTCC1062).